The sequence spans 134 residues: Small ribosomal subunit protein uS9 (134 aa).

The disordered stretch occupies residues 114-134; it reads EVERKKYGLKKARRAPQFSKR. Positions 120–134 are enriched in basic residues; sequence YGLKKARRAPQFSKR.

The protein belongs to the universal ribosomal protein uS9 family.

The protein is Small ribosomal subunit protein uS9 of Thermotoga sp. (strain RQ2).